The sequence spans 60 residues: Metallothionein B (60 aa).

The interval 1 to 28 is beta; that stretch reads MDPCDCSKSGTCNCGGSCTCTNCSCTTC. 20 residues coordinate a divalent metal cation: Cys-4, Cys-6, Cys-12, Cys-14, Cys-18, Cys-20, Cys-23, Cys-25, Cys-28, Cys-32, Cys-33, Cys-35, Cys-36, Cys-40, Cys-43, Cys-47, Cys-49, Cys-54, Cys-58, and Cys-59. An alpha region spans residues 29–60; it reads KKSCCPCCPSGCTKCASGCVCKGKTCDTSCCQ.

It belongs to the metallothionein superfamily. Type 1 family.

Its function is as follows. Metallothioneins have a high content of cysteine residues that bind various heavy metals. The chain is Metallothionein B (mtb) from Dicentrarchus labrax (European seabass).